The primary structure comprises 271 residues: MGRSRSRSSSRSKHTKSSKHNKKRSRSRSRSRDKERVRKRSKSRESKRNRRRESRSRSRSTNAAASRRERERASSPPDRIDIFGRTVSKRSSLDEKQKREEEEKKAEFERQRKIRQQEIEEKLIEEETARRVEELVAKRVEEELEKRKDEIEREVLRRVEEAKRIMEKQLLEELERQRQAELAAQKAREEEERAKREELERILEENNRKIAEAQAKLAEEQLRIVEEQRKIHEERMKLEQERQRQQKEEQKIILGKGKSRPKLSFSLKTQD.

Composition is skewed to basic residues over residues 1–29 (MGRSRSRSSSRSKHTKSSKHNKKRSRSRS) and 37–58 (VRKRSKSRESKRNRRRESRSRS). The tract at residues 1–72 (MGRSRSRSSS…AAASRRERER (72 aa)) is necessary and sufficient for RNA binding. A disordered region spans residues 1–112 (MGRSRSRSSS…EKKAEFERQR (112 aa)). Residues Ser58 and Ser60 each carry the phosphoserine modification. Position 61 is a phosphothreonine (Thr61). Composition is skewed to basic and acidic residues over residues 66 to 82 (SRRERERASSPPDRIDI) and 91 to 112 (SSLDEKQKREEEEKKAEFERQR). Positions 73-271 (ASSPPDRIDI…KLSFSLKTQD (199 aa)) are necessary and sufficient for transcriptional regulation. Phosphoserine occurs at positions 74 and 75. The LXXLL motif 1; degenerate motif lies at 170-174 (LLEEL). The short motif at 199–203 (LERIL) is the LXXLL motif 2; degenerate element. Basic and acidic residues predominate over residues 236 to 251 (MKLEQERQRQQKEEQK). The disordered stretch occupies residues 236 to 271 (MKLEQERQRQQKEEQKIILGKGKSRPKLSFSLKTQD). Ser264 bears the Phosphoserine mark.

It belongs to the ARGLU1 family. In terms of assembly, interacts with MED1; the interaction is direct. Interacts with PUF60, U2AF2 and JMJD6; may interact with other proteins involved in RNA processing and splicing. In terms of tissue distribution, high expression levels in the neocortex, hippocampus and thalamus but low expression levels in the midbrain and hindbrain (at protein level). Ubiquitously expressed with highest expression levels in the central nervous system and low expression in uterus and pancreas.

It is found in the nucleus. It localises to the nucleus speckle. The protein localises to the chromosome. In terms of biological role, dual function regulator of gene expression; regulator of transcription and modulator of alternative splicing. General coactivator of nuclear receptor-induced gene expression, including genes activated by the glucocorticoid receptor NR3C1. Binds to a subset of pre-mRNAs and to components of the spliceosome machinery to directly modulate basal alternative splicing; involved in simple and complex cassette exon splicing events. Binds its own pre-mRNA and regulates its alternative splicing and degradation; one of the alternatively spliced products is a stable intronic sequence RNA (sisRNA) that binds the protein to regulate its ability to affect splicing. Binding of the sisRNA stimulates phase separation and localization to nuclear speckles, which may contribute to activation of nuclear receptor-induced gene expression. May also indirectly modulate alternative splicing. Regulates transcription of genes involved in heart development, neuronal cell function, protein localization and chromatin localization. Regulates splicing of genes involved in neurogenesis and chromatin organization. Essential for central nervous system development. Required for the estrogen-dependent expression of ESR1 target genes. Can act in cooperation with MED1. The sequence is that of Arginine and glutamate-rich protein 1 (Arglu1) from Mus musculus (Mouse).